Reading from the N-terminus, the 166-residue chain is Large ribosomal subunit protein uL10 (166 aa).

Belongs to the universal ribosomal protein uL10 family. As to quaternary structure, part of the ribosomal stalk of the 50S ribosomal subunit. The N-terminus interacts with L11 and the large rRNA to form the base of the stalk. The C-terminus forms an elongated spine to which L12 dimers bind in a sequential fashion forming a multimeric L10(L12)X complex.

Functionally, forms part of the ribosomal stalk, playing a central role in the interaction of the ribosome with GTP-bound translation factors. The sequence is that of Large ribosomal subunit protein uL10 from Lactobacillus johnsonii (strain CNCM I-12250 / La1 / NCC 533).